The primary structure comprises 250 residues: 2,3-bisphosphoglycerate-dependent phosphoglycerate mutase (250 aa).

Residues 10–17, 23–24, R62, 89–92, K100, 116–117, and 185–186 contribute to the substrate site; these read RHGESQWN, TG, ERHY, RR, and GN. Residue H11 is the Tele-phosphohistidine intermediate of the active site. E89 (proton donor/acceptor) is an active-site residue.

Belongs to the phosphoglycerate mutase family. BPG-dependent PGAM subfamily. As to quaternary structure, homodimer.

The catalysed reaction is (2R)-2-phosphoglycerate = (2R)-3-phosphoglycerate. It participates in carbohydrate degradation; glycolysis; pyruvate from D-glyceraldehyde 3-phosphate: step 3/5. Functionally, catalyzes the interconversion of 2-phosphoglycerate and 3-phosphoglycerate. The protein is 2,3-bisphosphoglycerate-dependent phosphoglycerate mutase of Shigella dysenteriae serotype 1 (strain Sd197).